The sequence spans 372 residues: NAD(P)H-quinone oxidoreductase subunit 1 (372 aa).

8 consecutive transmembrane segments (helical) span residues 27-47 (IIWL…GVLV), 97-117 (ILFT…WLIV), 128-148 (VGIG…GLLM), 176-196 (LALS…IDIV), 204-224 (ILSW…ICAL), 266-286 (ILSA…PIPV), 308-328 (SIGI…AILL), and 347-367 (FLLP…LAFP).

It belongs to the complex I subunit 1 family. NDH-1 is composed of at least 11 different subunits.

Its subcellular location is the cellular thylakoid membrane. It catalyses the reaction a plastoquinone + NADH + (n+1) H(+)(in) = a plastoquinol + NAD(+) + n H(+)(out). It carries out the reaction a plastoquinone + NADPH + (n+1) H(+)(in) = a plastoquinol + NADP(+) + n H(+)(out). Functionally, NDH-1 shuttles electrons from an unknown electron donor, via FMN and iron-sulfur (Fe-S) centers, to quinones in the respiratory and/or the photosynthetic chain. The immediate electron acceptor for the enzyme in this species is believed to be plastoquinone. Couples the redox reaction to proton translocation, and thus conserves the redox energy in a proton gradient. The chain is NAD(P)H-quinone oxidoreductase subunit 1 from Prochlorococcus marinus subsp. pastoris (strain CCMP1986 / NIES-2087 / MED4).